Here is a 41-residue protein sequence, read N- to C-terminus: Photosystem I reaction center subunit IX (41 aa).

A helical transmembrane segment spans residues 7-27; that stretch reads YLSTAPVVAFAWITITAGLLI.

Belongs to the PsaJ family.

It localises to the plastid. Its subcellular location is the chloroplast thylakoid membrane. Its function is as follows. May help in the organization of the PsaE and PsaF subunits. The protein is Photosystem I reaction center subunit IX of Oedogonium cardiacum (Filamentous green alga).